The following is a 252-amino-acid chain: 5'-nucleotidase SurE (252 aa).

Residues D8, D9, S42, and N94 each coordinate a divalent metal cation.

Belongs to the SurE nucleotidase family. Requires a divalent metal cation as cofactor.

The protein resides in the cytoplasm. The catalysed reaction is a ribonucleoside 5'-phosphate + H2O = a ribonucleoside + phosphate. Nucleotidase that shows phosphatase activity on nucleoside 5'-monophosphates. This chain is 5'-nucleotidase SurE, found in Ehrlichia ruminantium (strain Welgevonden).